The following is a 228-amino-acid chain: Sliding clamp (228 aa).

It belongs to the Tevenvirinae sliding clamp family. As to quaternary structure, homotrimer. Interacts with the viral DNA polymerase; this interaction constitutes the polymerase holoenzyme. Interacts with the sliding-clamp-loader; this interaction allows the sliding-clamp-loader to open the sliding clamp. Interacts with the viral DNA ligase. Part of the replicase complex that includes the DNA polymerase, the polymerase clamp, the clamp loader complex, the single-stranded DNA binding protein, the primase, the helicase and the helicase assembly factor. Interacts with the viral RNA polymerase (RNAP). Part of the transcription activation complex containing host RNAP, the viral RNA polymerase sigma-like factor, the late transcription coactivator, and the sliding clamp.

Functionally, sliding clamp that encircles the genomic DNA and links the DNA polymerase to the template to control the processivity of DNA synthesis. Responsible for tethering the catalytic subunit of DNA polymerase to DNA during high-speed replication. Interaction with the sliding-clamp-loader opens the sliding clamp so that it can be loaded around the DNA template. During transcription, encircles the DNA and tethers host RNA polymerase (RNAP) to it. This chain is Sliding clamp (45), found in Escherichia coli (Bacteriophage T4).